The following is a 214-amino-acid chain: MRIILLGAPGAGKGTQAQFIMEKYGIPQISTGDMLRAAVKSGSELGKQAKDIMDAGKLVTDELVIALVKERIAQEDCRYGFLLDGFPRTIPQADAMKEAGINVDYVLEFDVPDELIVDRIVGRRVHAPSGRVYHVKFNPPKVEGKDDVTGEELTTRKDDQEETVRKRLVEYHQMTAPLIGYYSKEAEAGNTKYAKVDGTKPVAEVRAALEKILG.

10-15 (GAGKGT) is a binding site for ATP. The tract at residues 30-59 (STGDMLRAAVKSGSELGKQAKDIMDAGKLV) is NMP. Residues T31, R36, 57-59 (KLV), 85-88 (GFPR), and Q92 contribute to the AMP site. An LID region spans residues 122–159 (GRRVHAPSGRVYHVKFNPPKVEGKDDVTGEELTTRKDD). Residues R123 and 132 to 133 (VY) contribute to the ATP site. The AMP site is built by R156 and R167. K192 bears the N6-acetyllysine mark. Position 200 (K200) interacts with ATP.

It belongs to the adenylate kinase family. As to quaternary structure, monomer.

It is found in the cytoplasm. The catalysed reaction is AMP + ATP = 2 ADP. The protein operates within purine metabolism; AMP biosynthesis via salvage pathway; AMP from ADP: step 1/1. Functionally, catalyzes the reversible transfer of the terminal phosphate group between ATP and AMP. Plays an important role in cellular energy homeostasis and in adenine nucleotide metabolism. This is Adenylate kinase from Escherichia coli O45:K1 (strain S88 / ExPEC).